A 449-amino-acid polypeptide reads, in one-letter code: Neurexin-1a-beta (449 aa).

Residues 1–38 (MLRLWPGGAPGGLASILLRISLRLALWLPPLTLGSALA) form the signal peptide. The Extracellular portion of the chain corresponds to 39 to 373 (EGPGELYVPQ…EVIRESSSTT (335 aa)). The Laminin G-like domain maps to 71–272 (TTYIFGRDGG…DPNVRVEGSA (202 aa)). The disordered stretch occupies residues 276–366 (GDMPSSSITP…AKGYPSPEVI (91 aa)). Residues 280-311 (SSSITPQSSVSAAGNRSETSPSITDITTTTAS) are compositionally biased toward low complexity. Polar residues predominate over residues 312 to 322 (NRQGKQTTTPQ). Residues 374-394 (GMVVGIVAAAALCILILLYAM) form a helical membrane-spanning segment. At 395-449 (YKYRNRDEGSYHVDESRNYISNSATQPNGAAVKEKPIGVPKNKKDKKNKDKEYYV) the chain is on the cytoplasmic side. A disordered region spans residues 415–449 (SNSATQPNGAAVKEKPIGVPKNKKDKKNKDKEYYV).

The protein belongs to the neurexin family.

It localises to the membrane. Its function is as follows. Neuronal cell surface protein that may be involved in cell recognition and cell adhesion. May play a role in formation or maintenance of synaptic junctions. This is Neurexin-1a-beta (nrxn1a) from Danio rerio (Zebrafish).